A 1233-amino-acid chain; its full sequence is Integrator complex subunit 4 homolog (1233 aa).

HEAT repeat units lie at residues 236 to 273 and 275 to 310; these read SLINQIIEYIEPLLHSTSPLVRRETIVLLGSIVKNLDK and SEEIQILLLNYLKDTDFRVREASLKSLSVIFQRGAS. Residues 426–473 form a disordered region; that stretch reads RLQQKQQQQQQQQQQQQQQPPQQQPSQQPNQQPNQQQTNVSGTHIATP. The span at 428–462 shows a compositional bias: low complexity; the sequence is QQKQQQQQQQQQQQQQQPPQQQPSQQPNQQPNQQQ. 3 HEAT repeats span residues 487–524, 525–561, and 563–597; these read ILESGVIGAFIQGLEDEFYEVRSSAIDSMCELSVRNDE, FAQKNIDFLVDIFNDEIESVRINSINSLRKIGNNVVI, and EEQLHIILANLESSSKEERQSLHRLLTSIHLSNYS. Residues 767–792 are compositionally biased toward low complexity; sequence NNNTNNNNNNNNNNNNNNNNNNNNNN. Disordered stretches follow at residues 767–796 and 993–1057; these read NNNTNNNNNNNNNNNNNNNNNNNNNNDEND and DKKL…TTTT. The segment covering 1000–1013 has biased composition (acidic residues); sequence EENEENEENENNEN. Residues 1014–1030 show a composition bias toward basic and acidic residues; sequence ENEKENGKNKEKEKNEN. Residues 1046–1057 show a composition bias toward low complexity; sequence KTTSELIKTTTT.

It belongs to the Integrator subunit 4 family. In terms of assembly, component of the Integrator complex. The core complex associates with protein phosphatase 2A subunits, to form the Integrator-PP2A (INTAC) complex.

Its subcellular location is the nucleus. The protein resides in the cytoplasm. Functionally, component of the integrator complex, a multiprotein complex that terminates RNA polymerase II (Pol II) transcription in the promoter-proximal region of genes. The integrator complex provides a quality checkpoint during transcription elongation by driving premature transcription termination of transcripts that are unfavorably configured for transcriptional elongation: the complex terminates transcription by (1) catalyzing dephosphorylation of the C-terminal domain (CTD) of Pol II subunit polr2a, (2) degrading the exiting nascent RNA transcript via endonuclease activity and (3) promoting the release of Pol II from bound DNA. The integrator complex is also involved in terminating the synthesis of non-coding Pol II transcripts, such as enhancer RNAs (eRNAs), small nuclear RNAs (snRNAs), telomerase RNAs and long non-coding RNAs (lncRNAs). This Dictyostelium discoideum (Social amoeba) protein is Integrator complex subunit 4 homolog (ints4).